A 254-amino-acid chain; its full sequence is Ornithine decarboxylase antizyme (254 aa).

This sequence belongs to the ODC antizyme family. In terms of assembly, interacts with ODC1 and thereby sterically blocks ODC homodimerization.

Ornithine decarboxylase (ODC) antizyme protein that negatively regulates ODC activity and intracellular polyamine biosynthesis and uptake in response to increased intracellular polyamine levels. Binds to ODC monomers, inhibiting the assembly of the functional ODC homodimer, and targets the monomers for ubiquitin-independent proteolytic destruction by the 26S proteasome. Required for cellular differentiation in neuronal and myogenic lineages during embryonic development. In Drosophila melanogaster (Fruit fly), this protein is Ornithine decarboxylase antizyme (Oda).